Consider the following 436-residue polypeptide: 3-ketoacyl-CoA thiolase (436 aa).

Cysteine 99 (acyl-thioester intermediate) is an active-site residue. Residues histidine 392 and cysteine 422 each act as proton acceptor in the active site.

This sequence belongs to the thiolase-like superfamily. Thiolase family. Heterotetramer of two alpha chains (FadJ) and two beta chains (FadI).

The protein localises to the cytoplasm. The enzyme catalyses an acyl-CoA + acetyl-CoA = a 3-oxoacyl-CoA + CoA. The protein operates within lipid metabolism; fatty acid beta-oxidation. Its function is as follows. Catalyzes the final step of fatty acid oxidation in which acetyl-CoA is released and the CoA ester of a fatty acid two carbons shorter is formed. The sequence is that of 3-ketoacyl-CoA thiolase from Escherichia coli O1:K1 / APEC.